We begin with the raw amino-acid sequence, 514 residues long: 3-octaprenyl-4-hydroxybenzoate carboxy-lyase (514 aa).

A Mn(2+)-binding site is contributed by Asn177. Residues 180-182, 194-196, and 199-200 each bind prenylated FMN; these read IYR, RWL, and RG. Residue Glu243 participates in Mn(2+) binding. Asp314 (proton donor) is an active-site residue.

The protein belongs to the UbiD family. As to quaternary structure, homohexamer. Prenylated FMN is required as a cofactor. Mn(2+) serves as cofactor.

The protein localises to the cell membrane. It catalyses the reaction a 4-hydroxy-3-(all-trans-polyprenyl)benzoate + H(+) = a 2-(all-trans-polyprenyl)phenol + CO2. Its pathway is cofactor biosynthesis; ubiquinone biosynthesis. Functionally, catalyzes the decarboxylation of 3-octaprenyl-4-hydroxy benzoate to 2-octaprenylphenol, an intermediate step in ubiquinone biosynthesis. The chain is 3-octaprenyl-4-hydroxybenzoate carboxy-lyase from Bordetella petrii (strain ATCC BAA-461 / DSM 12804 / CCUG 43448).